The following is a 650-amino-acid chain: Chaperone protein HtpG (650 aa).

The interval 1-349 (MSKTVKKFET…SSDLPLNVSR (349 aa)) is a; substrate-binding. The interval 350-566 (EILQEDVQIK…EHGLNANMER (217 aa)) is b. A c region spans residues 567-650 (ILRAMNQTVP…VADGKAAAGE (84 aa)).

This sequence belongs to the heat shock protein 90 family. In terms of assembly, homodimer.

It localises to the cytoplasm. In terms of biological role, molecular chaperone. Has ATPase activity. The protein is Chaperone protein HtpG of Geobacter sulfurreducens (strain ATCC 51573 / DSM 12127 / PCA).